The sequence spans 482 residues: MVMQFQELENPVQISPCHSHTSSGFDMEVMSMKPAKGVLTEQVAGPLGQNLEVEPYSQYNNVQFPQVQPQISSSSYYSNVGFYPQQPEEWYSPGIYELRRMPAETLYQGETEVVEIPITKKARLGASAGRIKGDELCVVCGDRASGYHYNALTCEGCKGFFRRSITKNAVYKCKNGGNCVMDMYMRRKCQECRLRKCKEMGMLAECLLTEIQCKSKRLRKNVKQHADQAIHEDSEGRDLRQVTSTTKSCREKTELTPDQQNLLHYIMDSYSKQRMPQEITNKFLKEEFSAEENFIILTEMATSHVQVLVEFTKKLPGFQTLDHEDQIALLKGSAVEAMFLRSAEIFSKKLPAGHTDLLEERIRKSGISDEYITPMFSFYKSVAELKMTQEEYALLTAIVILSPDRQYIKDREAVEKLQEPLLDVLQKLCKIHQPENPQHFACLLGRLTELRTFNHHHADMLMSWRVNDHKFTPLLCEIWDVQ.

Residue lysine 132 forms a Glycyl lysine isopeptide (Lys-Gly) (interchain with G-Cter in SUMO1) linkage. Residues 134-209 (DELCVVCGDR…MGMLAECLLT (76 aa)) constitute a DNA-binding region (nuclear receptor). Residues 137–157 (CVVCGDRASGYHYNALTCEGC) form an NR C4-type zinc finger. Residues serine 145 and serine 164 each carry the phosphoserine; by PKC/PRKCA modification. Position 167 is an N6-acetyllysine; by EP300 (lysine 167). Residues 173-197 (CKNGGNCVMDMYMRRKCQECRLRKC) form an NR C4-type zinc finger. At lysine 216 the chain carries N6-methyllysine; by SETD7. An N6-acetyllysine; by EP300 modification is found at lysine 223. Positions 229 to 240 (AIHEDSEGRDLR) are enriched in basic and acidic residues. The segment at 229 to 253 (AIHEDSEGRDLRQVTSTTKSCREKT) is disordered. The NR LBD domain maps to 258-482 (DQQNLLHYIM…PLLCEIWDVQ (225 aa)). A Glycyl lysine isopeptide (Lys-Gly) (interchain with G-Cter in SUMO1) cross-link involves residue lysine 285. Chenodeoxycholate contacts are provided by arginine 341, tyrosine 371, and tyrosine 379. Position 452 is a phosphothreonine; by PKC/PRKCZ (threonine 452). Histidine 457 is a binding site for chenodeoxycholate.

It belongs to the nuclear hormone receptor family. NR1 subfamily. Heterodimer with RXRA; the heterodimerization enhances the binding affinity for LXXLL motifs from coactivators. Binds DNA predominantly as a heterodimer with RXRA. After activation by agonist binding interacts with coactivators. Interacts with NCOA1, NCOA2, PPARGC1A, CARM1, SETD7, PRMT1, GPS2, SMARCA4 and MED1, EP300 and SMARCD1. Interacts with XRCC5 and XRCC6; decreasing NR1H4/FXR transactivation activity towards ABCB11/BSEP. Interacts with PAGR1 AND NCOA6; indicative for an association with an MLL2/MLL3 complex (ASCOM). In terms of processing, acetylated by EP300. Lys-223 as is the major acetylation site for EP300; the dynamicly regulated acetylation inhibits heterodimerization with RXRA and transactivation activity. Deacetylated by SIRT1. Post-translationally, methylation may increase transactivation of target genes. Phosphorylation by PKC/PRKCA increases transactivation activity by promoting association with PPARGC1A. In terms of processing, sumoylated upon ligand binding.

It localises to the nucleus. Its function is as follows. Ligand-activated transcription factor. Receptor for bile acids (BAs) such as chenodeoxycholic acid (CDCA), lithocholic acid, deoxycholic acid (DCA) and allocholic acid (ACA). Plays a essential role in BA homeostasis through the regulation of genes involved in BA synthesis, conjugation and enterohepatic circulation. Also regulates lipid and glucose homeostasis and is involved innate immune response. The FXR-RXR heterodimer binds predominantly to farnesoid X receptor response elements (FXREs) containing two inverted repeats of the consensus sequence 5'-AGGTCA-3' in which the monomers are spaced by 1 nucleotide (IR-1) but also to tandem repeat DR1 sites with lower affinity, and can be activated by either FXR or RXR-specific ligands. It is proposed that monomeric nuclear receptors such as NR5A2/LRH-1 bound to coregulatory nuclear responsive element (NRE) halfsites located in close proximity to FXREs modulate transcriptional activity. In the liver activates transcription of the corepressor NR0B2 thereby indirectly inhibiting CYP7A1 and CYP8B1 (involved in BA synthesis) implicating at least in part histone demethylase KDM1A resulting in epigenomic repression, and SLC10A1/NTCP (involved in hepatic uptake of conjugated BAs). Activates transcription of the repressor MAFG (involved in regulation of BA synthesis). Activates transcription of SLC27A5/BACS and BAAT (involved in BA conjugation), ABCB11/BSEP (involved in bile salt export) by directly recruiting histone methyltransferase CARM1, and ABCC2/MRP2 (involved in secretion of conjugated BAs) and ABCB4 (involved in secretion of phosphatidylcholine in the small intestine). Activates transcription of SLC27A5/BACS and BAAT (involved in BA conjugation), ABCB11/BSEP (involved in bile salt export) by directly recruiting histone methyltransferase CARM1, and ABCC2/MRP2 (involved in secretion of conjugated BAs) and ABCB4 (involved in secretion of phosphatidylcholine in the small intestine). In the intestine activates FGF19 expression and secretion leading to hepatic CYP7A1 repression. The function also involves the coordinated induction of hepatic KLB/beta-klotho expression. Regulates transcription of liver UGT2B4 and SULT2A1 involved in BA detoxification; binding to the UGT2B4 promoter seems to imply a monomeric transactivation independent of RXRA. Modulates lipid homeostasis by activating liver NR0B2/SHP-mediated repression of SREBF1 (involved in de novo lipogenesis), expression of PLTP (involved in HDL formation), SCARB1 (involved in HDL hepatic uptake), APOE, APOC1, APOC4, PPARA (involved in beta-oxidation of fatty acids), VLDLR and SDC1 (involved in the hepatic uptake of LDL and IDL remnants), and inhibiting expression of MTTP (involved in VLDL assembly). Increases expression of APOC2 (promoting lipoprotein lipase activity implicated in triglyceride clearance). Transrepresses APOA1 involving a monomeric competition with NR2A1 for binding to a DR1 element. Also reduces triglyceride clearance by inhibiting expression of ANGPTL3 and APOC3 (both involved in inhibition of lipoprotein lipase). Involved in glucose homeostasis by modulating hepatic gluconeogenesis through activation of NR0B2/SHP-mediated repression of respective genes. Modulates glycogen synthesis (inducing phosphorylation of glycogen synthase kinase-3). Modulates glucose-stimulated insulin secretion and is involved in insulin resistance. Involved in intestinal innate immunity. Plays a role in protecting the distal small intestine against bacterial overgrowth and preservation of the epithelial barrier. Down-regulates inflammatory cytokine expression in several types of immune cells including macrophages and mononuclear cells. Mediates trans-repression of TLR4-induced cytokine expression; the function seems to require its sumoylation and prevents N-CoR nuclear receptor corepressor clearance from target genes such as IL1B and NOS2. Involved in the TLR9-mediated protective mechanism in intestinal inflammation. Plays an anti-inflammatory role in liver inflammation; proposed to inhibit pro-inflammatory (but not antiapoptotic) NF-kappa-B signaling. The sequence is that of Bile acid receptor (NR1H4) from Bos taurus (Bovine).